The chain runs to 231 residues: Large ribosomal subunit protein uL1 (231 aa).

Belongs to the universal ribosomal protein uL1 family. Part of the 50S ribosomal subunit.

Its function is as follows. Binds directly to 23S rRNA. The L1 stalk is quite mobile in the ribosome, and is involved in E site tRNA release. In terms of biological role, protein L1 is also a translational repressor protein, it controls the translation of the L11 operon by binding to its mRNA. The chain is Large ribosomal subunit protein uL1 from Pseudomonas putida (strain ATCC 700007 / DSM 6899 / JCM 31910 / BCRC 17059 / LMG 24140 / F1).